The primary structure comprises 155 residues: Ribonuclease H (155 aa).

The region spanning 4–145 (QQKVVEIYTD…ADALARKAIA (142 aa)) is the RNase H type-1 domain. 4 residues coordinate Mg(2+): Asp13, Glu51, Asp73, and Asp137.

The protein belongs to the RNase H family. Monomer. Requires Mg(2+) as cofactor.

Its subcellular location is the cytoplasm. It carries out the reaction Endonucleolytic cleavage to 5'-phosphomonoester.. In terms of biological role, endonuclease that specifically degrades the RNA of RNA-DNA hybrids. In Bartonella tribocorum (strain CIP 105476 / IBS 506), this protein is Ribonuclease H.